Here is a 789-residue protein sequence, read N- to C-terminus: Zinc finger protein GLIS1 (789 aa).

Composition is skewed to basic and acidic residues over residues 1–16 (MHCE…RPKE) and 63–74 (RAHDLLRPRSPR). Disordered regions lie at residues 1 to 29 (MHCE…GPVS), 53 to 93 (LLPR…YGHS), and 278 to 304 (PPLP…QEGS). Residues 80–92 (KTGSGKVNGSYGH) show a composition bias toward polar residues. Residues 366 to 391 (QACRWVDCCAAYEQQEELVRHIEKSH) form a C2H2-type 1 zinc finger. The segment at 400-427 (FTCFWAGCVRRYKPFNARYKLLIHMRVH) adopts a C2H2-type 2; atypical zinc-finger fold. 3 C2H2-type zinc fingers span residues 433-457 (NKCM…LRSH), 463-487 (YLCQ…QRTH), and 493-517 (YACQ…VKAH). Disordered stretches follow at residues 506-529 (DPSS…KKLH) and 573-684 (VYPG…QGYQ). Positions 511-527 (RKHVKAHSAKEQQVRKK) match the Bipartite nuclear localization signal motif. Residues 648-658 (ASQSQSPGGQS) show a composition bias toward low complexity.

It belongs to the GLI C2H2-type zinc-finger protein family. Interacts with KLF4. Interacts with POU5F1 and/or POU5F1B. Interacts with SOX2. In terms of tissue distribution, in the adult, expressed highly in placenta and kidney and at lower levels in the testis, brain, colon, brown fat tissue and thymus. During embryo development, expressed in the frontal nasal region, branchial arches, somites, vibrissal and hair follicles, limb buds, craniofacial regions, ventral part of the tail, intervertebral disks, teeth, eyes and kidney.

The protein resides in the nucleus. Its function is as follows. Acts both as a repressor and an ctivator of transcription. Binds to the consensus sequence 5'-GACCACCCAC-3'. By controlling the expression of genes involved in cell differentiation inhibits the lineage commitment of multipotent cells. Prevents, for instance, the differentiation of multipotent mesenchymal cells into adipocyte and osteoblast. The chain is Zinc finger protein GLIS1 from Mus musculus (Mouse).